A 360-amino-acid chain; its full sequence is DNA replication and repair protein RecF (360 aa).

33-40 lines the ATP pocket; it reads GENGSGKT.

It belongs to the RecF family.

It localises to the cytoplasm. Functionally, the RecF protein is involved in DNA metabolism; it is required for DNA replication and normal SOS inducibility. RecF binds preferentially to single-stranded, linear DNA. It also seems to bind ATP. The polypeptide is DNA replication and repair protein RecF (Rickettsia peacockii (strain Rustic)).